Consider the following 156-residue polypeptide: Ribosomal RNA large subunit methyltransferase H (156 aa).

S-adenosyl-L-methionine-binding positions include Leu-74, Gly-105, and 124 to 129 (LSKLTL).

The protein belongs to the RNA methyltransferase RlmH family. As to quaternary structure, homodimer.

Its subcellular location is the cytoplasm. The catalysed reaction is pseudouridine(1915) in 23S rRNA + S-adenosyl-L-methionine = N(3)-methylpseudouridine(1915) in 23S rRNA + S-adenosyl-L-homocysteine + H(+). In terms of biological role, specifically methylates the pseudouridine at position 1915 (m3Psi1915) in 23S rRNA. The polypeptide is Ribosomal RNA large subunit methyltransferase H (Legionella pneumophila (strain Paris)).